The following is a 1220-amino-acid chain: ATP-dependent helicase/nuclease subunit A (1220 aa).

One can recognise a UvrD-like helicase ATP-binding domain in the interval 9-473; the sequence is VIWTDDQWKS…IDLSQNFRSR (465 aa). Residue 30–37 coordinates ATP; sequence AAAGSGKT. The region spanning 474 to 782 is the UvrD-like helicase C-terminal domain; it reads PEVLSTTNYL…RMMTIHASKG (309 aa).

The protein belongs to the helicase family. AddA subfamily. In terms of assembly, heterodimer of AddA and AddB/RexB. Mg(2+) serves as cofactor.

It carries out the reaction Couples ATP hydrolysis with the unwinding of duplex DNA by translocating in the 3'-5' direction.. The catalysed reaction is ATP + H2O = ADP + phosphate + H(+). In terms of biological role, the heterodimer acts as both an ATP-dependent DNA helicase and an ATP-dependent, dual-direction single-stranded exonuclease. Recognizes the chi site generating a DNA molecule suitable for the initiation of homologous recombination. The AddA nuclease domain is required for chi fragment generation; this subunit has the helicase and 3' -&gt; 5' nuclease activities. The protein is ATP-dependent helicase/nuclease subunit A of Staphylococcus carnosus (strain TM300).